Reading from the N-terminus, the 204-residue chain is Large ribosomal subunit protein eL15 (204 aa).

The protein belongs to the eukaryotic ribosomal protein eL15 family. Component of the large ribosomal subunit.

The protein localises to the cytoplasm. Component of the large ribosomal subunit. The ribosome is a large ribonucleoprotein complex responsible for the synthesis of proteins in the cell. This is Large ribosomal subunit protein eL15 (rpl15) from Mylopharyngodon piceus (Black carp).